Here is a 284-residue protein sequence, read N- to C-terminus: D-tagatose-1,6-bisphosphate aldolase subunit GatY (284 aa).

Aspartate 82 acts as the Proton donor in catalysis. Residues histidine 83 and histidine 180 each coordinate Zn(2+). Position 181 (glycine 181) interacts with dihydroxyacetone phosphate. Position 208 (histidine 208) interacts with Zn(2+). Dihydroxyacetone phosphate-binding positions include 209-211 (GAS) and 230-233 (NVAT).

Belongs to the class II fructose-bisphosphate aldolase family. TagBP aldolase GatY subfamily. In terms of assembly, forms a complex with GatZ. Zn(2+) is required as a cofactor.

It catalyses the reaction D-tagatofuranose 1,6-bisphosphate = D-glyceraldehyde 3-phosphate + dihydroxyacetone phosphate. It participates in carbohydrate metabolism; D-tagatose 6-phosphate degradation; D-glyceraldehyde 3-phosphate and glycerone phosphate from D-tagatose 6-phosphate: step 2/2. In terms of biological role, catalytic subunit of the tagatose-1,6-bisphosphate aldolase GatYZ, which catalyzes the reversible aldol condensation of dihydroxyacetone phosphate (DHAP or glycerone-phosphate) with glyceraldehyde 3-phosphate (G3P) to produce tagatose 1,6-bisphosphate (TBP). Requires GatZ subunit for full activity and stability. Is involved in the catabolism of galactitol. The protein is D-tagatose-1,6-bisphosphate aldolase subunit GatY of Escherichia coli O139:H28 (strain E24377A / ETEC).